Consider the following 316-residue polypeptide: uncharacterized protein (316 aa).

Residue Thr-126 coordinates substrate. Tyr-149 serves as the catalytic Proton acceptor.

Belongs to the NAD(P)-dependent epimerase/dehydratase family.

This is an uncharacterized protein from Bacillus subtilis (strain 168).